Reading from the N-terminus, the 161-residue chain is Cyclin-dependent protein kinase inhibitor SMR12 (161 aa).

The span at Glu-84–Asn-93 shows a compositional bias: acidic residues. Residues Glu-84–Ile-106 are disordered.

Functionally, probable cyclin-dependent protein kinase (CDK) inhibitor that functions as a repressor of mitosis in the endoreduplication cell cycle. In Arabidopsis thaliana (Mouse-ear cress), this protein is Cyclin-dependent protein kinase inhibitor SMR12.